Consider the following 98-residue polypeptide: NADH-ubiquinone oxidoreductase chain 4L (98 aa).

3 helical membrane passes run 1–21 (MSLVYMNIMMAFTVSLTGLLM), 29–49 (SLLCLEGMMLSLFILATLMIL), and 61–81 (IILLVFAACEAALGLSLLVMV).

This sequence belongs to the complex I subunit 4L family. As to quaternary structure, core subunit of respiratory chain NADH dehydrogenase (Complex I) which is composed of 45 different subunits.

Its subcellular location is the mitochondrion inner membrane. It carries out the reaction a ubiquinone + NADH + 5 H(+)(in) = a ubiquinol + NAD(+) + 4 H(+)(out). Functionally, core subunit of the mitochondrial membrane respiratory chain NADH dehydrogenase (Complex I) which catalyzes electron transfer from NADH through the respiratory chain, using ubiquinone as an electron acceptor. Part of the enzyme membrane arm which is embedded in the lipid bilayer and involved in proton translocation. This Ovis aries (Sheep) protein is NADH-ubiquinone oxidoreductase chain 4L (MT-ND4L).